A 511-amino-acid polypeptide reads, in one-letter code: Cytochrome P450 705A5 (511 aa).

Residues 12 to 30 (CFIFLLLCLFSRLSYDLFF) form a helical membrane-spanning segment. Residue C454 participates in heme binding.

Belongs to the cytochrome P450 family. It depends on heme as a cofactor. Expressed primarily in the root epidermis.

The protein localises to the membrane. Converts thalian-diol to a desaturated thalian-diol. This Arabidopsis thaliana (Mouse-ear cress) protein is Cytochrome P450 705A5 (CYP705A5).